The sequence spans 475 residues: Zinc finger protein 383 (475 aa).

The region spanning 6–77 is the KRAB domain; that stretch reads VMFSDVSIDF…GRELTRGLCS (72 aa). C2H2-type zinc fingers lie at residues 170–192, 198–220, 226–248, 254–276, 282–304, 310–332, 338–360, 366–388, 394–416, 422–444, and 450–472; these read FECK…QRIH, YECK…LKIH, YECK…QRIH, YACK…VRIH, YDCK…QRIH, FECL…QRIH, YECN…LRIH, and YNCK…QGIH.

This sequence belongs to the krueppel C2H2-type zinc-finger protein family.

It is found in the nucleus. The protein resides in the cytoplasm. In terms of biological role, may function as a transcriptional repressor, suppressing transcriptional activities mediated by MAPK signaling pathways. The chain is Zinc finger protein 383 (ZNF383) from Macaca fascicularis (Crab-eating macaque).